A 449-amino-acid chain; its full sequence is Hyaluronidase-3 (449 aa).

The signal sequence occupies residues 1 to 23; that stretch reads MYHIWIKFLAAWIFLKKFNGVHV. Cystine bridges form between cysteine 47-cysteine 340 and cysteine 211-cysteine 227. 3 N-linked (GlcNAc...) asparagine glycosylation sites follow: asparagine 67, asparagine 103, and asparagine 111. Glutamate 135 serves as the catalytic Proton donor. Asparagine 153 carries N-linked (GlcNAc...) asparagine glycosylation. A glycan (N-linked (GlcNAc...) asparagine) is linked at asparagine 357. 3 cysteine pairs are disulfide-bonded: cysteine 365–cysteine 376, cysteine 370–cysteine 427, and cysteine 429–cysteine 438. A glycan (N-linked (GlcNAc...) asparagine) is linked at asparagine 401. In terms of domain architecture, EGF-like spans 427–438; the sequence is CQCYQGWKGLYC.

It belongs to the glycosyl hydrolase 56 family. As to quaternary structure, monomer. In terms of tissue distribution, expressed by the venom gland.

The protein resides in the secreted. The enzyme catalyses Random hydrolysis of (1-&gt;4)-linkages between N-acetyl-beta-D-glucosamine and D-glucuronate residues in hyaluronate.. Its function is as follows. Snake venom endo-hyaluronidase that degrades hyaluronan to smaller oligosaccharide fragments. In venom, it is not toxic by itself, but increases the diffusion of other venom proteins by degrading the extracellular matrix. In addition, it displays antiedematogenic activity. This Cerastes cerastes (Horned desert viper) protein is Hyaluronidase-3.